The primary structure comprises 884 residues: MAPSASAATNGYDVDRLLAGYRTARAQETLFDLRDGPGAGYDEFVDDDGNVRPTWTELADAVAERGKAGLDRLRSVVHSLIDHDGITYTAIDAHRDALTGDHDLEPGPWRLDPLPLVISAADWEVLEAGLVQRSRLLDAILADLYGPRSMLTEGVLPPEMLFAHPGYVRAANGIQMPGRHQLFMHACDLSRLPDGTFQVNADWTQAPSGSGYAMADRRVVAHAVPDLYEELAPRPTTPFAQALRLALIDAAPDVAQDPVVVVLSPGIYSETAFDQAYLATLLGFPLVESADLVVRDGKLWMRSLGTLKRVDVVLRRVDAHYADPLDLRADSRLGVVGLVEAQHRGTVTVVNTLGSGILENPGLLRFLPQLSERLLDESPLLHTAPVYWGGIASERSHLLANVSSLLIKSTVSGETLVGPTLSSAQLADLAVRIEAMPWQWVGQELPQFSSAPTNHAGVLSSAGVGMRLFTVAQRSGYAPMIGGLGYVLAPGPAAYTLKTVAAKDIWVRPTERAHAEVITVPVLAPPAKTGAGTWAVSSPRVLSDLFWMGRYGERAENMARLLIVTRERYHVFRHQQDTDESECVPVLMAALGKITGYDTATGAGSAYDRADMIAVAPSTLWSLTVDPDRPGSLVQSVEGLALAAQAVRDQLSNDTWMVLANVERAVEHKSDPPQSLAEADAVLASAQAETLAGMLTLSGVAGESMVHDVGWTMMDIGKRIERGLWLTALLQATLSTVRHPAAEQAIIEATLVACESSVIYRRRTVGKFSVAAVTELMLFDAQNPRSLVYQLERLRADLKDLPGSSGSSRPERMVDEMNTRLRRSHPEELEEVSADGLRAELAELLAGIHASLRDVADVLTATQLALPGGMQPLWGPDQRRVMPA.

This is an uncharacterized protein from Mycobacterium tuberculosis (strain ATCC 25618 / H37Rv).